An 874-amino-acid chain; its full sequence is Probable inorganic carbon transporter subunit DabA (874 aa).

Zn(2+)-binding residues include Cys-398, Asp-400, His-580, and Cys-595.

This sequence belongs to the inorganic carbon transporter (TC 9.A.2) DabA family. In terms of assembly, forms a complex with DabB. Requires Zn(2+) as cofactor.

The protein resides in the cell membrane. In terms of biological role, part of an energy-coupled inorganic carbon pump. In Bacillus cereus (strain AH187), this protein is Probable inorganic carbon transporter subunit DabA.